Consider the following 177-residue polypeptide: Peptide deformylase (177 aa).

2 residues coordinate Fe cation: Cys-98 and His-140. Glu-141 is an active-site residue. Residue His-144 coordinates Fe cation.

It belongs to the polypeptide deformylase family. Requires Fe(2+) as cofactor.

The enzyme catalyses N-terminal N-formyl-L-methionyl-[peptide] + H2O = N-terminal L-methionyl-[peptide] + formate. In terms of biological role, removes the formyl group from the N-terminal Met of newly synthesized proteins. Requires at least a dipeptide for an efficient rate of reaction. N-terminal L-methionine is a prerequisite for activity but the enzyme has broad specificity at other positions. The sequence is that of Peptide deformylase from Zymomonas mobilis subsp. mobilis (strain ATCC 31821 / ZM4 / CP4).